The primary structure comprises 563 residues: Arginine--tRNA ligase (563 aa).

The short motif at 120-130 (PNIAKPFHVGH) is the 'HIGH' region element.

This sequence belongs to the class-I aminoacyl-tRNA synthetase family. Monomer.

It is found in the cytoplasm. It carries out the reaction tRNA(Arg) + L-arginine + ATP = L-arginyl-tRNA(Arg) + AMP + diphosphate. The polypeptide is Arginine--tRNA ligase (Clostridium beijerinckii (strain ATCC 51743 / NCIMB 8052) (Clostridium acetobutylicum)).